The primary structure comprises 449 residues: Phosphoglucosamine mutase (449 aa).

Residue Ser-105 is the Phosphoserine intermediate of the active site. Residues Ser-105, Asp-242, Asp-244, and Asp-246 each coordinate Mg(2+). Ser-105 is modified (phosphoserine).

It belongs to the phosphohexose mutase family. Requires Mg(2+) as cofactor. In terms of processing, activated by phosphorylation.

It carries out the reaction alpha-D-glucosamine 1-phosphate = D-glucosamine 6-phosphate. In terms of biological role, catalyzes the conversion of glucosamine-6-phosphate to glucosamine-1-phosphate. This chain is Phosphoglucosamine mutase, found in Clavibacter sepedonicus (Clavibacter michiganensis subsp. sepedonicus).